The chain runs to 300 residues: Fatty acid hydroxylase uhd1 (300 aa).

NADP(+) contacts are provided by residues 14–20, Arg-39, 63–64, 83–85, Tyr-156, Lys-160, 183–186, and Ser-199; these read GANGFVG, DL, VAS, and PVYI. Lys-160 serves as the catalytic Proton donor.

This sequence belongs to the NAD(P)-dependent epimerase/dehydratase family. Dihydroflavonol-4-reductase subfamily.

The protein operates within secondary metabolite biosynthesis. Functionally, fatty acid hydroxylase; part of the gene cluster that mediates the biosynthesis of the glycolipid biosurfactant ustilagic acid (UA). UA is a secreted cellobiose glycolipid that is toxic for many microorganisms and confers biocontrol activity to U.maydis. UA consists of 15,16-dihydroxypalmitic or 2,15,16-trihydroxypalmitic acid, which is O-glycosidically linked to cellobiose at its terminal hydroxyl group. In addition, the cellobiose moiety is acetylated and acylated with a short-chain hydroxy fatty acid. UA biosynthesis starts with omega-hydroxylation of palmitic acid catalyzed by the cytochrome P450 monooxygenase cyp1. Terminal hydroxylation of palmitic acid precedes subterminal hydroxylation catalyzed by the cytochrome P450 monooxygenase cyp2. Sequential glucosylation of the hydroxy fatty acid is probably catalyzed by the glycosyltransferase ugt1. The cellobiose lipid is further decorated by acetylation of the proximal glucose residue and by acylation with a short-chain beta-hydroxy fatty acid at the distal glucose residue. The acyltransferase uat1 may be a good candidate for catalyzing either acetylation or acylation of the cellobiose lipid. The fatty acid synthase fas2 may be involved in synthesis of the carbon backbone of the short-chain beta-hydroxy fatty acid esterified to the cellobiose disaccharide. The secreted UA consists of a mixture of both alpha-hydroxylated and non-hydroxylated glycolipids; therefore, alpha-hydroxylation of the long-chain fatty, catalyzed by the fatty acid hydroxylase ahd1, occurs late in UA biosynthesis and may be the last step before secretion. The polypeptide is Fatty acid hydroxylase uhd1 (Mycosarcoma maydis (Corn smut fungus)).